The chain runs to 102 residues: Small ribosomal subunit protein uS10 (102 aa).

This sequence belongs to the universal ribosomal protein uS10 family. As to quaternary structure, part of the 30S ribosomal subunit.

In terms of biological role, involved in the binding of tRNA to the ribosomes. The sequence is that of Small ribosomal subunit protein uS10 from Methylorubrum populi (strain ATCC BAA-705 / NCIMB 13946 / BJ001) (Methylobacterium populi).